A 1008-amino-acid chain; its full sequence is Kinesin-like protein KIN-5C (1008 aa).

One can recognise a Kinesin motor domain in the interval 12-359; it reads NVQVLLRCRP…LDYAHRAKSI (348 aa). Residue 98-105 coordinates ATP; that stretch reads GQTGTGKT. Residues 402-459 are a coiled coil; it reads KDRYQQEENERKAMADQIEQMTTSLEANQKQINDLQEKYDSELQHSADLSKKLEATEK. Disordered stretches follow at residues 910-931, 943-962, and 975-1008; these read VEAH…TAGI, YKDY…EVPS, and ESLM…TINN. The segment covering 913–925 has biased composition (basic and acidic residues); it reads HLGESQHLQESHS. The segment covering 979-995 has biased composition (basic and acidic residues); sequence DEFRENHPYEPSKDRRP.

It belongs to the TRAFAC class myosin-kinesin ATPase superfamily. Kinesin family. KIN-5/BimC subfamily.

It is found in the cytoplasm. It localises to the cytoskeleton. Its subcellular location is the spindle. Its function is as follows. Responsible for microtubule translocation. May be important for the organization of phragmoplast-specific arrays of microtubules. Plays an essential role in stabilizing the mitotic spindle. Required during mitotic cytokinesis. The protein is Kinesin-like protein KIN-5C of Oryza sativa subsp. japonica (Rice).